A 158-amino-acid chain; its full sequence is NADH-quinone oxidoreductase subunit B 1 (158 aa).

[4Fe-4S] cluster contacts are provided by cysteine 37, cysteine 38, cysteine 102, and cysteine 132.

Belongs to the complex I 20 kDa subunit family. In terms of assembly, NDH-1 is composed of 14 different subunits. Subunits NuoB, C, D, E, F, and G constitute the peripheral sector of the complex. Requires [4Fe-4S] cluster as cofactor.

It localises to the cell inner membrane. It catalyses the reaction a quinone + NADH + 5 H(+)(in) = a quinol + NAD(+) + 4 H(+)(out). Functionally, NDH-1 shuttles electrons from NADH, via FMN and iron-sulfur (Fe-S) centers, to quinones in the respiratory chain. Couples the redox reaction to proton translocation (for every two electrons transferred, four hydrogen ions are translocated across the cytoplasmic membrane), and thus conserves the redox energy in a proton gradient. The sequence is that of NADH-quinone oxidoreductase subunit B 1 from Azoarcus sp. (strain BH72).